Consider the following 443-residue polypeptide: ATP-dependent protease ATPase subunit HslU (443 aa).

ATP contacts are provided by residues I20, 62 to 67, D255, E321, and R393; that span reads GVGKTE.

Belongs to the ClpX chaperone family. HslU subfamily. As to quaternary structure, a double ring-shaped homohexamer of HslV is capped on each side by a ring-shaped HslU homohexamer. The assembly of the HslU/HslV complex is dependent on binding of ATP.

Its subcellular location is the cytoplasm. Its function is as follows. ATPase subunit of a proteasome-like degradation complex; this subunit has chaperone activity. The binding of ATP and its subsequent hydrolysis by HslU are essential for unfolding of protein substrates subsequently hydrolyzed by HslV. HslU recognizes the N-terminal part of its protein substrates and unfolds these before they are guided to HslV for hydrolysis. The sequence is that of ATP-dependent protease ATPase subunit HslU from Helicobacter acinonychis (strain Sheeba).